Consider the following 209-residue polypeptide: Auxin-binding protein ABP19a (209 aa).

The first 18 residues, 1–18 (MIFPIFFTFFLLLSSSHA), serve as a signal peptide directing secretion. Cysteine 24 and cysteine 39 are oxidised to a cystine. Residues 53 to 199 (SGLGIAGNTT…TTFLDAAQIK (147 aa)) form the Cupin type-1 domain. Asparagine 60 carries an N-linked (GlcNAc...) asparagine glycan. The Mn(2+) site is built by histidine 101, histidine 103, glutamate 108, and histidine 147.

This sequence belongs to the germin family. In terms of assembly, interacts with ABP20.

Its subcellular location is the secreted. It is found in the extracellular space. The protein localises to the apoplast. The protein resides in the cell wall. In terms of biological role, probable receptor for the plant growth-promoting hormone auxin. The polypeptide is Auxin-binding protein ABP19a (ABP19A) (Prunus persica (Peach)).